The primary structure comprises 193 residues: Peptidyl-tRNA hydrolase (193 aa).

Tyrosine 16 is a binding site for tRNA. Histidine 21 (proton acceptor) is an active-site residue. Residues tyrosine 66, asparagine 68, and asparagine 114 each contribute to the tRNA site.

It belongs to the PTH family. In terms of assembly, monomer.

It localises to the cytoplasm. The catalysed reaction is an N-acyl-L-alpha-aminoacyl-tRNA + H2O = an N-acyl-L-amino acid + a tRNA + H(+). Its function is as follows. Hydrolyzes ribosome-free peptidyl-tRNAs (with 1 or more amino acids incorporated), which drop off the ribosome during protein synthesis, or as a result of ribosome stalling. Functionally, catalyzes the release of premature peptidyl moieties from peptidyl-tRNA molecules trapped in stalled 50S ribosomal subunits, and thus maintains levels of free tRNAs and 50S ribosomes. This is Peptidyl-tRNA hydrolase from Geobacter sulfurreducens (strain ATCC 51573 / DSM 12127 / PCA).